Here is a 237-residue protein sequence, read N- to C-terminus: Ras-related protein Rab-23 (237 aa).

Residues V20, G21, K22, S23, S24, Y38, and T41 each coordinate GTP. Residue S23 participates in Mg(2+) binding. Residues 28-46 (RYCKGIFTKDYKKTIGVDF) carry the Switch 1 motif. Residues T41 and D64 each contribute to the Mg(2+) site. The Switch 2 motif lies at 65–84 (TAGQEEFDAITKAYYRGAQA). GTP is bound by residues G67, N121, K122, D124, S151, V152, and K153. A phosphoserine mark is found at S186 and S187. The segment covering 188-208 (SNKIGVFNTSGGSHSGQNSGT) has biased composition (polar residues). Positions 188 to 237 (SNKIGVFNTSGGSHSGQNSGTLNGGDVINLRPNKQRTKKNRNPFSSCSIP) are disordered. C234 is modified (cysteine methyl ester). C234 carries the S-geranylgeranyl cysteine lipid modification. Residues 235 to 237 (SIP) constitute a propeptide, removed in mature form.

It belongs to the small GTPase superfamily. Rab family. In terms of assembly, interacts with SUFU. Mg(2+) serves as cofactor.

The protein resides in the cell membrane. It localises to the cytoplasm. Its subcellular location is the cytoplasmic vesicle. It is found in the autophagosome. The protein localises to the endosome membrane. The protein resides in the phagosome. It localises to the phagosome membrane. The catalysed reaction is GTP + H2O = GDP + phosphate + H(+). Its activity is regulated as follows. Regulated by guanine nucleotide exchange factors (GEFs) which promote the exchange of bound GDP for free GTP. Regulated by GTPase activating proteins (GAPs) which increase the GTP hydrolysis activity. Inhibited by GDP dissociation inhibitors (GDIs). In terms of biological role, the small GTPases Rab are key regulators of intracellular membrane trafficking, from the formation of transport vesicles to their fusion with membranes. Rabs cycle between an inactive GDP-bound form and an active GTP-bound form that is able to recruit to membranes different set of downstream effectors directly responsible for vesicle formation, movement, tethering and fusion. Together with SUFU, prevents nuclear import of GLI1, and thereby inhibits GLI1 transcription factor activity. Regulates GLI1 in differentiating chondrocytes. Likewise, regulates GLI3 proteolytic processing and modulates GLI2 and GLI3 transcription factor activity. Plays a role in autophagic vacuole assembly, and mediates defense against pathogens, such as S.aureus, by promoting their capture by autophagosomes that then merge with lysosomes. The chain is Ras-related protein Rab-23 from Homo sapiens (Human).